Here is a 291-residue protein sequence, read N- to C-terminus: Light-independent protochlorophyllide reductase iron-sulfur ATP-binding protein (291 aa).

Residues 10 to 15 (GIGKST) and Lys39 contribute to the ATP site. Ser14 lines the Mg(2+) pocket. The [4Fe-4S] cluster site is built by Cys95 and Cys129. 180–181 (NR) contacts ATP.

It belongs to the NifH/BchL/ChlL family. Homodimer. Protochlorophyllide reductase is composed of three subunits; ChlL, ChlN and ChlB. The cofactor is [4Fe-4S] cluster.

It localises to the plastid. The protein localises to the chloroplast. It catalyses the reaction chlorophyllide a + oxidized 2[4Fe-4S]-[ferredoxin] + 2 ADP + 2 phosphate = protochlorophyllide a + reduced 2[4Fe-4S]-[ferredoxin] + 2 ATP + 2 H2O. It functions in the pathway porphyrin-containing compound metabolism; chlorophyll biosynthesis (light-independent). Its function is as follows. Component of the dark-operative protochlorophyllide reductase (DPOR) that uses Mg-ATP and reduced ferredoxin to reduce ring D of protochlorophyllide (Pchlide) to form chlorophyllide a (Chlide). This reaction is light-independent. The L component serves as a unique electron donor to the NB-component of the complex, and binds Mg-ATP. The protein is Light-independent protochlorophyllide reductase iron-sulfur ATP-binding protein of Picea abies (Norway spruce).